Consider the following 196-residue polypeptide: Holliday junction branch migration complex subunit RuvA (196 aa).

The interval 1–64 (MIDRLRGQLV…EDAMLLFGFA (64 aa)) is domain I. Residues 65 to 143 (TREEREAFDA…AAAGGGGGVA (79 aa)) are domain II. Residues 144 to 153 (AGEGDGPFME) form a flexible linker region. The domain III stretch occupies residues 153–196 (EAREALTGLGYSLEEAERALRDVPPQETVEQYIKAALRKIGGRR).

Belongs to the RuvA family. As to quaternary structure, homotetramer. Forms an RuvA(8)-RuvB(12)-Holliday junction (HJ) complex. HJ DNA is sandwiched between 2 RuvA tetramers; dsDNA enters through RuvA and exits via RuvB. An RuvB hexamer assembles on each DNA strand where it exits the tetramer. Each RuvB hexamer is contacted by two RuvA subunits (via domain III) on 2 adjacent RuvB subunits; this complex drives branch migration. In the full resolvosome a probable DNA-RuvA(4)-RuvB(12)-RuvC(2) complex forms which resolves the HJ.

The protein resides in the cytoplasm. In terms of biological role, the RuvA-RuvB-RuvC complex processes Holliday junction (HJ) DNA during genetic recombination and DNA repair, while the RuvA-RuvB complex plays an important role in the rescue of blocked DNA replication forks via replication fork reversal (RFR). RuvA specifically binds to HJ cruciform DNA, conferring on it an open structure. The RuvB hexamer acts as an ATP-dependent pump, pulling dsDNA into and through the RuvAB complex. HJ branch migration allows RuvC to scan DNA until it finds its consensus sequence, where it cleaves and resolves the cruciform DNA. This Rubrobacter xylanophilus (strain DSM 9941 / JCM 11954 / NBRC 16129 / PRD-1) protein is Holliday junction branch migration complex subunit RuvA.